Reading from the N-terminus, the 408-residue chain is LL-diaminopimelate aminotransferase (408 aa).

Residues Y15 and G42 each coordinate substrate. Pyridoxal 5'-phosphate-binding positions include Y72, 108 to 109 (AK), Y132, N186, Y217, and 245 to 247 (SFS). 3 residues coordinate substrate: K109, Y132, and N186. N6-(pyridoxal phosphate)lysine is present on K248. Pyridoxal 5'-phosphate contacts are provided by R256 and N291. Substrate is bound by residues N291 and R386.

It belongs to the class-I pyridoxal-phosphate-dependent aminotransferase family. LL-diaminopimelate aminotransferase subfamily. In terms of assembly, homodimer. Requires pyridoxal 5'-phosphate as cofactor.

The enzyme catalyses (2S,6S)-2,6-diaminopimelate + 2-oxoglutarate = (S)-2,3,4,5-tetrahydrodipicolinate + L-glutamate + H2O + H(+). Its pathway is amino-acid biosynthesis; L-lysine biosynthesis via DAP pathway; LL-2,6-diaminopimelate from (S)-tetrahydrodipicolinate (aminotransferase route): step 1/1. In terms of biological role, involved in the synthesis of meso-diaminopimelate (m-DAP or DL-DAP), required for both lysine and peptidoglycan biosynthesis. Catalyzes the direct conversion of tetrahydrodipicolinate to LL-diaminopimelate. This is LL-diaminopimelate aminotransferase from Desulfotalea psychrophila (strain LSv54 / DSM 12343).